The following is a 248-amino-acid chain: tRNA (guanine-N(1)-)-methyltransferase (248 aa).

S-adenosyl-L-methionine is bound by residues G117 and 137–142 (IGDFVL).

It belongs to the RNA methyltransferase TrmD family. Homodimer.

It is found in the cytoplasm. The enzyme catalyses guanosine(37) in tRNA + S-adenosyl-L-methionine = N(1)-methylguanosine(37) in tRNA + S-adenosyl-L-homocysteine + H(+). Specifically methylates guanosine-37 in various tRNAs. This is tRNA (guanine-N(1)-)-methyltransferase from Polynucleobacter asymbioticus (strain DSM 18221 / CIP 109841 / QLW-P1DMWA-1) (Polynucleobacter necessarius subsp. asymbioticus).